The sequence spans 422 residues: Carboxypeptidase B2 (422 aa).

The N-terminal stretch at 1–21 (MKLHGLGILVAIILYEQHGFA) is a signal peptide. Residues 22-113 (FQSGQVLSAL…QTFNDTVSPR (92 aa)) constitute a propeptide, activation peptide. N-linked (GlcNAc...) asparagine glycosylation is found at asparagine 43, asparagine 72, asparagine 84, and asparagine 107. The region spanning 121–418 (QYHSLNEIYS…AAISKIVWHV (298 aa)) is the Peptidase M14 domain. Residues cysteine 177 and cysteine 190 are joined by a disulfide bond. Zn(2+)-binding residues include histidine 180 and glutamate 183. Substrate is bound by residues 180 to 183 (HARE) and arginine 238. Asparagine 240 is a glycosylation site (N-linked (GlcNAc...) asparagine). Cystine bridges form between cysteine 249-cysteine 273 and cysteine 264-cysteine 278. 255 to 256 (NR) provides a ligand contact to substrate. Residue histidine 309 coordinates Zn(2+). 310–311 (SY) contributes to the substrate binding site. An N-linked (GlcNAc...) asparagine glycan is attached at asparagine 322. Tyrosine 362 provides a ligand contact to substrate. The Proton donor/acceptor role is filled by glutamate 384.

The protein belongs to the peptidase M14 family. Requires Zn(2+) as cofactor. Plasma; synthesized in the liver.

It is found in the secreted. It catalyses the reaction Release of C-terminal Arg and Lys from a polypeptide.. With respect to regulation, TAFI/CPB2 is unique among carboxypeptidases in that it spontaneously inactivates with a short half-life, a property that is crucial for its role in controlling blood clot lysis. The zymogen is stabilized by interactions with the activation peptide. Release of the activation peptide increases a dynamic flap mobility and in time this leads to conformational changes that disrupt the catalytic site and expose a cryptic thrombin-cleavage site present at Arg-323. Functionally, cleaves C-terminal arginine or lysine residues from biologically active peptides such as kinins or anaphylatoxins in the circulation thereby regulating their activities. Down-regulates fibrinolysis by removing C-terminal lysine residues from fibrin that has already been partially degraded by plasmin. In Mus musculus (Mouse), this protein is Carboxypeptidase B2 (Cpb2).